The sequence spans 79 residues: Putative antitoxin MM_2475 (79 aa).

This sequence belongs to the UPF0330 family.

Possibly the antitoxin component of a type II toxin-antitoxin (TA) system. The protein is Putative antitoxin MM_2475 of Methanosarcina mazei (strain ATCC BAA-159 / DSM 3647 / Goe1 / Go1 / JCM 11833 / OCM 88) (Methanosarcina frisia).